The following is a 124-amino-acid chain: Large ribosomal subunit protein bL20 (124 aa).

The protein belongs to the bacterial ribosomal protein bL20 family.

Functionally, binds directly to 23S ribosomal RNA and is necessary for the in vitro assembly process of the 50S ribosomal subunit. It is not involved in the protein synthesizing functions of that subunit. The chain is Large ribosomal subunit protein bL20 from Gemmatimonas aurantiaca (strain DSM 14586 / JCM 11422 / NBRC 100505 / T-27).